The following is a 727-amino-acid chain: Phosphoribosylformylglycinamidine synthase subunit PurL (727 aa).

Residue histidine 47 is part of the active site. ATP is bound by residues tyrosine 50 and lysine 82. Glutamate 84 provides a ligand contact to Mg(2+). Substrate contacts are provided by residues 85–88 and arginine 107; that span reads SHNH. The active-site Proton acceptor is the histidine 86. Aspartate 108 provides a ligand contact to Mg(2+). Glutamine 229 contributes to the substrate binding site. Residue aspartate 257 coordinates Mg(2+). A substrate-binding site is contributed by 301 to 303; sequence ESQ. ATP contacts are provided by aspartate 486 and glycine 523. Residue asparagine 524 coordinates Mg(2+). Serine 526 contacts substrate.

This sequence belongs to the FGAMS family. Monomer. Part of the FGAM synthase complex composed of 1 PurL, 1 PurQ and 2 PurS subunits.

It localises to the cytoplasm. It catalyses the reaction N(2)-formyl-N(1)-(5-phospho-beta-D-ribosyl)glycinamide + L-glutamine + ATP + H2O = 2-formamido-N(1)-(5-O-phospho-beta-D-ribosyl)acetamidine + L-glutamate + ADP + phosphate + H(+). It participates in purine metabolism; IMP biosynthesis via de novo pathway; 5-amino-1-(5-phospho-D-ribosyl)imidazole from N(2)-formyl-N(1)-(5-phospho-D-ribosyl)glycinamide: step 1/2. Functionally, part of the phosphoribosylformylglycinamidine synthase complex involved in the purines biosynthetic pathway. Catalyzes the ATP-dependent conversion of formylglycinamide ribonucleotide (FGAR) and glutamine to yield formylglycinamidine ribonucleotide (FGAM) and glutamate. The FGAM synthase complex is composed of three subunits. PurQ produces an ammonia molecule by converting glutamine to glutamate. PurL transfers the ammonia molecule to FGAR to form FGAM in an ATP-dependent manner. PurS interacts with PurQ and PurL and is thought to assist in the transfer of the ammonia molecule from PurQ to PurL. This is Phosphoribosylformylglycinamidine synthase subunit PurL from Petrotoga mobilis (strain DSM 10674 / SJ95).